We begin with the raw amino-acid sequence, 470 residues long: UDP-N-acetylmuramoylalanine--D-glutamate ligase (470 aa).

ATP is bound at residue 120–126 (GSNGKTT).

The protein belongs to the MurCDEF family.

It localises to the cytoplasm. It carries out the reaction UDP-N-acetyl-alpha-D-muramoyl-L-alanine + D-glutamate + ATP = UDP-N-acetyl-alpha-D-muramoyl-L-alanyl-D-glutamate + ADP + phosphate + H(+). The protein operates within cell wall biogenesis; peptidoglycan biosynthesis. In terms of biological role, cell wall formation. Catalyzes the addition of glutamate to the nucleotide precursor UDP-N-acetylmuramoyl-L-alanine (UMA). The protein is UDP-N-acetylmuramoylalanine--D-glutamate ligase of Nitrosomonas eutropha (strain DSM 101675 / C91 / Nm57).